The primary structure comprises 369 residues: N-succinyl-L-Arg/Lys racemase (369 aa).

Substrate is bound by residues tyrosine 26, aspartate 51, 161–163, and 191–193; these read KMK and DVN. 3 residues coordinate Mg(2+): aspartate 191, glutamate 218, and aspartate 243. Residues lysine 267, 295–296, and 320–322 contribute to the substrate site; these read SM and ELT.

The protein belongs to the mandelate racemase/muconate lactonizing enzyme family. It depends on Mg(2+) as a cofactor.

In terms of biological role, catalyzes efficient racemization of N-succinyl-L-Arg and N-succinyl-L-Lys, suggesting that these are physiological substrates of this enzyme. Has low activity with L-Asp-L-Lys, and even lower activity with L-Leu-L-Arg, L-Leu-L-Lys, N-succinyl-L-His and N-succinyl-L-Met (in vitro). In Bacillus cereus (strain ATCC 14579 / DSM 31 / CCUG 7414 / JCM 2152 / NBRC 15305 / NCIMB 9373 / NCTC 2599 / NRRL B-3711), this protein is N-succinyl-L-Arg/Lys racemase.